We begin with the raw amino-acid sequence, 980 residues long: MAVALAAAAGKLRRAIGRSCPWQPFSTEPGPPHGAAVRDAFLSFFRDRHGHRLVPSATVRPRGDPSLLFVNAGMNQFKPIFLGTVDPRSEMAGFRRVVNSQKCVRAGGRHNDLEDVGRDLSHHTFFEMLGNWAFGGEYFKEEACSMAWELLTQVYGIPEDRLWVSYFSGDSQTGLDPDLETRDIWLSLGVPASRVLSFGPQENFWEMGDTGPCGPCTEIHYDLAGGVGSPQLVELWNLVFMQHYREADGSLQLLPQRHVDTGMGLERLVAVLQGKRSTYDTDLFSPLLDAIHQSCGAPPYSGRVGAADEGRIDTAYRVVADHIRTLSVCIADGVSPGMSGAPLVLRRILRRAVRYSTEVLQAPPGFLGSLVPVVVETLGSAYPELEKNSVKIASLVSEDEAAFLASLQRGRRIIDRTVKRLGPSDLFPAEVAWSLSLSGNLGIPLDLVELMLEEKGVKLDTAGLEQLAQKEAQHRAQQAEADQEDRLCLDVHALEELHRQGIPTTDDSPKYNYTLHPNGDYEFGLCEARVLQLYSETGTAVASVGAGQRCGLLLDRTNFYAEQGGQASDRGYLVRTGQQDMLFPVAGAQLCGGFILHEAMAPERLQVGDQVQLYVDKAWRMGCMVKHTATHLLSWALRQTLGPTTEQRGSHLNPERLRFDVATQTLLTTEQLRTVESYVQEVVGQDKPVFMEEVPLAHTARIPGLRSLDEVYPDPVRVVSVGVPVAHALGPASQAAMHTSVELCCGTHLLSTGAVGDLVIIGERQLVKGITRLLAITGEQAQQAREVGQSLSQEVEAASERLSQGSRDLPEAHRLSKDIGRLTEVAESAVIPQWQRQELQTTLKMLQRRANTAIRKLEKGQATEKSQELLKRHSEGPLIVDTVSAESLSVLVKVVRQLCKQAPSISVLLLSPQPTGSVLCACQVAQDATPTFTAEAWALAVCSHMGGKAWGSRVVAQGTGHTADLEAALGTARAYALSQL.

The transit peptide at 1–23 (MAVALAAAAGKLRRAIGRSCPWQ) directs the protein to the mitochondrion. Residues arginine 105, histidine 123, tryptophan 205, and 235–237 (LWN) each bind ATP. Positions 237 and 260 each coordinate L-alanine. Glycine 264 provides a ligand contact to ATP. Residues histidine 627, histidine 631, cysteine 744, and histidine 748 each contribute to the Zn(2+) site.

Belongs to the class-II aminoacyl-tRNA synthetase family. In terms of assembly, monomer. Zn(2+) serves as cofactor.

The protein resides in the mitochondrion. The catalysed reaction is tRNA(Ala) + L-alanine + ATP = L-alanyl-tRNA(Ala) + AMP + diphosphate. The enzyme catalyses (S)-lactate + ATP + H(+) = (S)-lactoyl-AMP + diphosphate. It catalyses the reaction (S)-lactoyl-AMP + L-lysyl-[protein] = N(6)-[(S)-lactoyl]-L-lysyl-[protein] + AMP + 2 H(+). Catalyzes the attachment of alanine to tRNA(Ala) in a two-step reaction: alanine is first activated by ATP to form Ala-AMP and then transferred to the acceptor end of tRNA(Ala). Also edits incorrectly charged tRNA(Ala) via its editing domain. In presence of high levels of lactate, also acts as a protein lactyltransferase that mediates lactylation of lysine residues in target proteins, such as CGAS. Acts as an inhibitor of cGAS/STING signaling by catalyzing lactylation of CGAS, preventing the formation of liquid-like droplets in which CGAS is activated. This chain is Alanine--tRNA ligase, mitochondrial (Aars2), found in Mus musculus (Mouse).